Reading from the N-terminus, the 162-residue chain is UPF0460 protein y4vQ (162 aa).

This sequence belongs to the UPF0460 family.

The protein is UPF0460 protein y4vQ of Sinorhizobium fredii (strain NBRC 101917 / NGR234).